We begin with the raw amino-acid sequence, 542 residues long: CTP synthase (542 aa).

The amidoligase domain stretch occupies residues Met1–Ile265. Ser13 serves as a coordination point for CTP. Ser13 lines the UTP pocket. Ser14–Ile19 lines the ATP pocket. Tyr54 is a binding site for L-glutamine. Residue Asp71 coordinates ATP. Asp71 and Glu139 together coordinate Mg(2+). CTP-binding positions include Asp146 to Glu148, Lys186 to Gln191, and Lys222. UTP is bound by residues Lys186–Gln191 and Lys222. Positions Thr291–Leu541 constitute a Glutamine amidotransferase type-1 domain. Gly353 contributes to the L-glutamine binding site. The active-site Nucleophile; for glutamine hydrolysis is the Cys380. L-glutamine is bound by residues Phe381 to Gln384, Glu404, and Arg469. Active-site residues include His514 and Glu516.

The protein belongs to the CTP synthase family. As to quaternary structure, homotetramer.

The enzyme catalyses UTP + L-glutamine + ATP + H2O = CTP + L-glutamate + ADP + phosphate + 2 H(+). It carries out the reaction L-glutamine + H2O = L-glutamate + NH4(+). It catalyses the reaction UTP + NH4(+) + ATP = CTP + ADP + phosphate + 2 H(+). It participates in pyrimidine metabolism; CTP biosynthesis via de novo pathway; CTP from UDP: step 2/2. With respect to regulation, allosterically activated by GTP, when glutamine is the substrate; GTP has no effect on the reaction when ammonia is the substrate. The allosteric effector GTP functions by stabilizing the protein conformation that binds the tetrahedral intermediate(s) formed during glutamine hydrolysis. Inhibited by the product CTP, via allosteric rather than competitive inhibition. Functionally, catalyzes the ATP-dependent amination of UTP to CTP with either L-glutamine or ammonia as the source of nitrogen. Regulates intracellular CTP levels through interactions with the four ribonucleotide triphosphates. This Brucella melitensis biotype 2 (strain ATCC 23457) protein is CTP synthase.